Reading from the N-terminus, the 910-residue chain is Valine--tRNA ligase (910 aa).

The short motif at 46-56 is the 'HIGH' region element; sequence PNVTGSLHMGH. The short motif at 539 to 543 is the 'KMSKS' region element; sequence KMSKS. Lysine 542 contributes to the ATP binding site. A coiled-coil region spans residues 845-909; it reads DLDILRNKIQ…QMLQERLKML (65 aa).

This sequence belongs to the class-I aminoacyl-tRNA synthetase family. ValS type 1 subfamily. Monomer.

The protein localises to the cytoplasm. The enzyme catalyses tRNA(Val) + L-valine + ATP = L-valyl-tRNA(Val) + AMP + diphosphate. In terms of biological role, catalyzes the attachment of valine to tRNA(Val). As ValRS can inadvertently accommodate and process structurally similar amino acids such as threonine, to avoid such errors, it has a 'posttransfer' editing activity that hydrolyzes mischarged Thr-tRNA(Val) in a tRNA-dependent manner. In Synechocystis sp. (strain ATCC 27184 / PCC 6803 / Kazusa), this protein is Valine--tRNA ligase.